A 324-amino-acid polypeptide reads, in one-letter code: Phospho-N-acetylmuramoyl-pentapeptide-transferase (324 aa).

Helical transmembrane passes span 13-33, 57-77, 85-105, 121-141, 143-163, 179-199, 201-221, 238-260, and 303-323; these read VLSA…IFIP, GTPT…MLII, GMIV…DDIL, MILL…NIGT, IIIP…PLVV, IDGL…IVGF, TGHY…LGFL, LALG…IIIV, and VKLV…GFIA.

It belongs to the glycosyltransferase 4 family. MraY subfamily. Mg(2+) is required as a cofactor.

The protein localises to the cell membrane. It carries out the reaction UDP-N-acetyl-alpha-D-muramoyl-L-alanyl-gamma-D-glutamyl-meso-2,6-diaminopimeloyl-D-alanyl-D-alanine + di-trans,octa-cis-undecaprenyl phosphate = di-trans,octa-cis-undecaprenyl diphospho-N-acetyl-alpha-D-muramoyl-L-alanyl-D-glutamyl-meso-2,6-diaminopimeloyl-D-alanyl-D-alanine + UMP. It functions in the pathway cell wall biogenesis; peptidoglycan biosynthesis. Functionally, catalyzes the initial step of the lipid cycle reactions in the biosynthesis of the cell wall peptidoglycan: transfers peptidoglycan precursor phospho-MurNAc-pentapeptide from UDP-MurNAc-pentapeptide onto the lipid carrier undecaprenyl phosphate, yielding undecaprenyl-pyrophosphoryl-MurNAc-pentapeptide, known as lipid I. This is Phospho-N-acetylmuramoyl-pentapeptide-transferase from Clostridium botulinum (strain Eklund 17B / Type B).